Reading from the N-terminus, the 1463-residue chain is Chitin binding domain (ChtBD2) containing chtb-1 (1463 aa).

The signal sequence occupies residues 1–17 (MLRNLILITLLVASGHG). Positions 70-99 (SSVPSVPAENTQPQQHPKARKPASPNICEQ) are disordered. The region spanning 94 to 164 (PNICEQDNGA…IVPKRMSSLS (71 aa)) is the Chitin-binding type-2 domain. The cysteines at positions 141 and 154 are disulfide-linked. Disordered regions lie at residues 720–773 (IDSD…DFPI) and 841–869 (KNPKKRKTKRRKQKQDENEMEASANFPDS). Residues 722–734 (SDTNSTTNPSQPE) are compositionally biased toward polar residues. Basic residues-rich tracts occupy residues 740-756 (NNTKKSNSSKKHRKPKK) and 843-853 (PKKRKTKRRKQ).

This chain is Chitin binding domain (ChtBD2) containing chtb-1, found in Caenorhabditis elegans.